The primary structure comprises 597 residues: Translation initiation factor IF-2 (597 aa).

2 stretches are compositionally biased toward low complexity: residues 57 to 73 (GGDAAPAAASAPAAATA) and 81 to 95 (TPAAAAQADAEPASD). A disordered region spans residues 57-96 (GGDAAPAAASAPAAATAEPEEADETPAAAAQADAEPASDL). Residues 98–271 (HRAPVVTIMG…ELEDLRADPK (174 aa)) enclose the tr-type G domain. The interval 107–114 (GHVDHGKT) is G1. Residue 107 to 114 (GHVDHGKT) coordinates GTP. The G2 stretch occupies residues 132-136 (GITQH). Residues 153–156 (DTPG) form a G3 region. GTP-binding positions include 153-157 (DTPGH) and 207-210 (NKVD). The tract at residues 207-210 (NKVD) is G4. A G5 region spans residues 243 to 245 (SAK).

The protein belongs to the TRAFAC class translation factor GTPase superfamily. Classic translation factor GTPase family. IF-2 subfamily.

It is found in the cytoplasm. Functionally, one of the essential components for the initiation of protein synthesis. Protects formylmethionyl-tRNA from spontaneous hydrolysis and promotes its binding to the 30S ribosomal subunits. Also involved in the hydrolysis of GTP during the formation of the 70S ribosomal complex. This Deinococcus radiodurans (strain ATCC 13939 / DSM 20539 / JCM 16871 / CCUG 27074 / LMG 4051 / NBRC 15346 / NCIMB 9279 / VKM B-1422 / R1) protein is Translation initiation factor IF-2.